A 429-amino-acid polypeptide reads, in one-letter code: Patatin-like phospholipase domain-containing protein 5 (429 aa).

Residues 12–181 (LSFSGAGYLG…SNNLPFADCP (170 aa)) form the PNPLA domain. The GXGXXG signature appears at 16–21 (GAGYLG). The short motif at 47–51 (GSSSG) is the GXSXG element. Ser49 serves as the catalytic Nucleophile. Catalysis depends on Asp168, which acts as the Proton acceptor. The short motif at 168–170 (DGA) is the DGA/G element.

In terms of tissue distribution, expressed in brain and pituitary gland.

It catalyses the reaction a triacylglycerol + H2O = a diacylglycerol + a fatty acid + H(+). Functionally, has abundant triacylglycerol lipase activity. The protein is Patatin-like phospholipase domain-containing protein 5 of Homo sapiens (Human).